The sequence spans 351 residues: Fructose-1,6-bisphosphatase class 1 (351 aa).

Mg(2+) is bound by residues Glu94, Asp113, Leu115, and Asp116. Residues 116-119 (DGSS) and Asn207 each bind substrate. Residue Glu279 participates in Mg(2+) binding.

The protein belongs to the FBPase class 1 family. In terms of assembly, homotetramer. Requires Mg(2+) as cofactor.

It localises to the cytoplasm. The catalysed reaction is beta-D-fructose 1,6-bisphosphate + H2O = beta-D-fructose 6-phosphate + phosphate. It functions in the pathway carbohydrate biosynthesis; gluconeogenesis. The protein is Fructose-1,6-bisphosphatase class 1 of Methylobacterium radiotolerans (strain ATCC 27329 / DSM 1819 / JCM 2831 / NBRC 15690 / NCIMB 10815 / 0-1).